A 451-amino-acid polypeptide reads, in one-letter code: MRIPVDASTSRRFTPPSTALSPGKMSEALPLGAPDGGPALASKLRSGDRSMVEVLADHPGELVRTDSPNFLCSVLPTHWRCNKTLPIAFKVVALGDVPDGTLVTVMAGNDENYSAELRNATAAMKNQVARFNDLRFVGRSGRGKSFTLTITVFTNPPQVATYHRAIKITVDGPREPRRHRQKLDDQTKPGSLSFSERLSELEQLRRTAMRVSPHHPAPTPNPRASLNHSTAFNPQPQSQMQDARQIQPSPPWSYDQSYQYLGSITSSSVHPATPISPGRASGMTSLSAELSSRLSTAPDLTAFGDPRQFPTLPSISDPRMHYPGAFTYSPPVTSGIGIGMSAMSSASRYHTYLPPPYPGSSQAQAGPFQTGSPSYHLYYGASAGSYQFSMVGGERSPPRILPPCTNASTGAALLNPSLPSQSDVVETEGSHSNSPTNMPPARLEEAVWRPY.

Residues 1–37 (MRIPVDASTSRRFTPPSTALSPGKMSEALPLGAPDGG) are disordered. Polar residues predominate over residues 7–20 (ASTSRRFTPPSTAL). At Thr14 the chain carries Phosphothreonine. Phosphoserine is present on Ser21. Residues Lys24 and Lys43 each carry the N6-acetyllysine modification. One can recognise a Runt domain in the interval 50-178 (SMVEVLADHP…TVDGPREPRR (129 aa)). The tract at residues 80–84 (RCNKT) is interaction with DNA. Chloride is bound by residues Asn112, Glu116, Arg139, and Val170. Interaction with DNA stretches follow at residues 135-143 (RFVGRSGRG) and 168-177 (ITVDGPREPR). Disordered stretches follow at residues 170-195 (VDGP…LSFS) and 209-252 (MRVS…SPPW). Phosphoserine occurs at positions 193 and 212. Residues 222–247 (PRASLNHSTAFNPQPQSQMQDARQIQ) are compositionally biased toward polar residues. The residue at position 249 (Ser249) is a Phosphoserine; by HIPK2. 2 positions are modified to phosphoserine: Ser266 and Ser268. Residues 268-290 (SVHPATPISPGRASGMTSLSAEL) are disordered. The residue at position 273 (Thr273) is a Phosphothreonine; by HIPK2. Ser276 carries the phosphoserine; by HIPK2 modification. An interaction with KAT6A region spans residues 291–370 (SSRLSTAPDL…SQAQAGPFQT (80 aa)). Residue Thr296 is modified to Phosphothreonine. Positions 307 to 399 (RQFPTLPSIS…MVGGERSPPR (93 aa)) are interaction with KAT6B. Positions 361 to 401 (SQAQAGPFQTGSPSYHLYYGASAGSYQFSMVGGERSPPRIL) are interaction with FOXP3. The interval 406-451 (NASTGAALLNPSLPSQSDVVETEGSHSNSPTNMPPARLEEAVWRPY) is disordered. The segment covering 417-436 (SLPSQSDVVETEGSHSNSPT) has biased composition (polar residues). The residue at position 434 (Ser434) is a Phosphoserine. The span at 442–451 (RLEEAVWRPY) shows a compositional bias: basic and acidic residues.

Heterodimer with CBFB. RUNX1 binds DNA as a monomer and through the Runt domain. DNA-binding is increased by heterodimerization. Interacts with TLE1 and ALYREF/THOC4. Interacts with HIPK2, ELF1, ELF2 and SPI1. Interacts via its Runt domain with the ELF4 N-terminal region. Interaction with ELF2 isoform 2 (NERF-1a) may act to repress RUNX1-mediated transactivation. Interacts with KAT6A and KAT6B. Interacts with SUV39H1, leading to abrogation of transactivating and DNA-binding properties of RUNX1. Interacts with YAP1. Interaction with CDK6 prevents myeloid differentiation, reducing its transcription transactivation activity. Found in a complex with PRMT5, RUNX1 and CBFB. Interacts with FOXP3. Interacts with TBX21. Interacts with DPF2. Post-translationally, phosphorylated in its C-terminus upon IL-6 treatment. Phosphorylation enhances interaction with KAT6A. Methylated. In terms of processing, phosphorylated in Ser-249 Thr-273 and Ser-276 by HIPK2 when associated with CBFB and DNA. This phosphorylation promotes subsequent EP300 phosphorylation. In terms of tissue distribution, isoform 4 is expressed at high levels in thymus, spleen and T-cell lines and at lower levels in myeloid cell lines and nonhematopoietic cells. Isoform 5 is expressed ubiquitously in lumbar vertebrae, brain, kidney, heart, muscle, ovary and osteoblast-like cell line MC3T3-E1.

It is found in the nucleus. Forms the heterodimeric complex core-binding factor (CBF) with CBFB. RUNX members modulate the transcription of their target genes through recognizing the core consensus binding sequence 5'-TGTGGT-3', or very rarely, 5'-TGCGGT-3', within their regulatory regions via their runt domain, while CBFB is a non-DNA-binding regulatory subunit that allosterically enhances the sequence-specific DNA-binding capacity of RUNX. The heterodimers bind to the core site of a number of enhancers and promoters, including murine leukemia virus, polyomavirus enhancer, T-cell receptor enhancers, LCK, IL3 and GM-CSF promoters. Essential for the development of normal hematopoiesis. Acts synergistically with ELF4 to transactivate the IL-3 promoter and with ELF2 to transactivate the BLK promoter. Inhibits KAT6B-dependent transcriptional activation. Involved in lineage commitment of immature T cell precursors. CBF complexes repress ZBTB7B transcription factor during cytotoxic (CD8+) T cell development. They bind to RUNX-binding sequence within the ZBTB7B locus acting as transcriptional silencer and allowing for cytotoxic T cell differentiation. CBF complexes binding to the transcriptional silencer is essential for recruitment of nuclear protein complexes that catalyze epigenetic modifications to establish epigenetic ZBTB7B silencing. Controls the anergy and suppressive function of regulatory T-cells (Treg) by associating with FOXP3. Activates the expression of IL2 and IFNG and down-regulates the expression of TNFRSF18, IL2RA and CTLA4, in conventional T-cells. Positively regulates the expression of RORC in T-helper 17 cells. Functionally, isoform 4 shows higher binding activities for target genes and binds TCR-beta-E2 and RAG-1 target site with threefold higher affinity than other isoforms. It is less effective in the context of neutrophil terminal differentiation. The protein is Runt-related transcription factor 1 (Runx1) of Mus musculus (Mouse).